We begin with the raw amino-acid sequence, 286 residues long: MGKEVDVSTLEAGGARDYIDPPPAPLVDVDELGKWSLYRALIAEFVATLLFLYVTVATVIGYKHQTDAAVNGADAACGGVGVLGIAWAFGGMIFILVYCTAGVSGGHINPAVTLGLFLARKVSLVRALLYMAAQCLGAICGVALVKGFQSSLYDRYGGGANELAAGYSTGTGLAAEIIGTFVLVYTVFSATDPKRNARDSHVPVLAPLPIGFAVFMVHLATIPITGTGINPARSLGVAVVYNNNKAWSDQWIFWVGPFIGAAIAALYHQVILRASARGYGSFRSNA.

The next 2 membrane-spanning stretches (helical) occupy residues 40-60 (ALIA…ATVI) and 77-97 (CGGV…FILV). The short motif at 109 to 111 (NPA) is the NPA 1 element. 3 helical membrane-spanning segments follow: residues 128 to 148 (LLYM…VKGF), 170 to 190 (GTGL…VFSA), and 204 to 224 (VLAP…TIPI). An NPA 2 motif is present at residues 230–232 (NPA). The chain crosses the membrane as a helical span at residues 252-272 (IFWVGPFIGAAIAALYHQVIL).

Belongs to the MIP/aquaporin (TC 1.A.8) family. PIP (TC 1.A.8.11) subfamily. As to expression, expressed in roots.

The protein resides in the cell membrane. Water channel required to facilitate the transport of water across cell membrane. May play a role in root water uptake. In Oryza sativa subsp. japonica (Rice), this protein is Aquaporin PIP2-4 (PIP2-4).